The chain runs to 334 residues: Probable tRNA pseudouridine synthase B (334 aa).

Catalysis depends on aspartate 82, which acts as the Nucleophile. A PUA domain is found at 250 to 325; that stretch reads LPKVWIRDSA…IAVDVDKVFM (76 aa).

The protein belongs to the pseudouridine synthase TruB family. Type 2 subfamily.

It carries out the reaction uridine(55) in tRNA = pseudouridine(55) in tRNA. Functionally, could be responsible for synthesis of pseudouridine from uracil-55 in the psi GC loop of transfer RNAs. The protein is Probable tRNA pseudouridine synthase B of Thermococcus onnurineus (strain NA1).